The sequence spans 253 residues: Sulfate transporter CysZ (253 aa).

The next 4 helical transmembrane spans lie at 31–51 (FVIL…WWLF), 72–92 (LSYL…GYFF), 151–171 (IVLL…PVLW), and 222–242 (IPVL…AMWV).

This sequence belongs to the CysZ family.

The protein resides in the cell inner membrane. High affinity, high specificity proton-dependent sulfate transporter, which mediates sulfate uptake. Provides the sulfur source for the cysteine synthesis pathway. The sequence is that of Sulfate transporter CysZ from Salmonella paratyphi A (strain AKU_12601).